The sequence spans 256 residues: 5-keto-4-deoxy-D-glucarate aldolase (256 aa).

Catalysis depends on His-50, which acts as the Proton acceptor. Gln-151 is a substrate binding site. Residue Glu-153 participates in Mg(2+) binding. Residues Ser-178 and Asp-179 each coordinate substrate. Asp-179 contacts Mg(2+).

Belongs to the HpcH/HpaI aldolase family. KDGluc aldolase subfamily. Homohexamer; trimer of dimers. Mg(2+) serves as cofactor.

The enzyme catalyses 5-dehydro-4-deoxy-D-glucarate = 2-hydroxy-3-oxopropanoate + pyruvate. The catalysed reaction is 2-dehydro-3-deoxy-D-glucarate = 2-hydroxy-3-oxopropanoate + pyruvate. Its pathway is carbohydrate acid metabolism; galactarate degradation; D-glycerate from galactarate: step 2/3. Its function is as follows. Catalyzes the reversible retro-aldol cleavage of both 5-keto-4-deoxy-D-glucarate and 2-keto-3-deoxy-D-glucarate to pyruvate and tartronic semialdehyde. The protein is 5-keto-4-deoxy-D-glucarate aldolase of Salmonella paratyphi C (strain RKS4594).